A 644-amino-acid chain; its full sequence is Adhesion G-protein coupled receptor F2 (644 aa).

The N-terminal stretch at 1–18 (MIPAHWLYCLMLLLPIES) is a signal peptide. Residues 19 to 386 (CRILCQASSK…ESPVLTYITY (368 aa)) lie on the Extracellular side of the membrane. N-linked (GlcNAc...) asparagine glycosylation is found at Asn-155, Asn-219, Asn-293, and Asn-311. In terms of domain architecture, GAIN-B spans 233-377 (SRGSLGKNFT…SILMSPNTLE (145 aa)). Cystine bridges form between Cys-329–Cys-356 and Cys-344–Cys-358. A GPS region spans residues 329 to 377 (CVGWHSLESRWDWRACKTIQENSRQAVCRCRPNKLYTSFSILMSPNTLE). A helical membrane pass occupies residues 387–407 (IGLGISICSLIICLAIEVLVW). At 408–422 (SQVTKTEISYLRHLC) the chain is on the cytoplasmic side. A helical membrane pass occupies residues 423–443 (IANIAATLLMADAWFIVASFL). The Extracellular portion of the chain corresponds to 444-465 (SGPVLHHNGCVAATFFVHFFYL). The helical transmembrane segment at 466–486 (SVFFWMLAKALLILYGILIVF) threads the bilayer. The Cytoplasmic segment spans residues 487-493 (HTLPKSC). The chain crosses the membrane as a helical span at residues 494 to 514 (LVASLFSVGYGCPLVIAIITL). Residues 515–541 (AVTEPGKGYLRPEACWLNWDMTKALLA) lie on the Extracellular side of the membrane. The chain crosses the membrane as a helical span at residues 542-562 (FVVPALAIVVVNLITVTMVII). Residues 563–585 (KTQRAAIGSSMFQEVRAIVRICK) lie on the Cytoplasmic side of the membrane. The helical transmembrane segment at 586–606 (NIAILTPLLGLTWGFGIATVI) threads the bilayer. The Extracellular segment spans residues 607-610 (NGHS). Residues 611 to 631 (LAFHIIFSLLNALQVSPDAAV) traverse the membrane as a helical segment.

It belongs to the G-protein coupled receptor 2 family. Adhesion G-protein coupled receptor (ADGR) subfamily. Mainly expressed in skin and heart, and very weakly in lung and spleen. Detected in all epidermal layers of skin.

The protein resides in the membrane. Functionally, orphan receptor. The sequence is that of Adhesion G-protein coupled receptor F2 (Adgrf2) from Mus musculus (Mouse).